A 290-amino-acid chain; its full sequence is Mitochondrial dicarboxylate carrier (290 aa).

Solcar repeat units lie at residues 6-90, 101-188, and 197-281; these read TKRL…VKKQ, QKAL…IKQT, and DNLQ…LRLK. 3 helical membrane-spanning segments follow: residues 12–32, 65–84, and 103–123; these read WYFG…LDLL, GVSA…FGIY, and ALLA…GDLV. Residue K159 is modified to N6-acetyllysine. 3 helical membrane-spanning segments follow: residues 163 to 182, 203 to 223, and 256 to 276; these read GATM…LSFY, FASS…LDVM, and GFIP…IFFE.

This sequence belongs to the mitochondrial carrier (TC 2.A.29) family.

It localises to the mitochondrion inner membrane. It carries out the reaction (S)-malate(in) + phosphate(out) = (S)-malate(out) + phosphate(in). The enzyme catalyses malonate(out) + (S)-malate(in) = malonate(in) + (S)-malate(out). It catalyses the reaction (S)-malate(in) + succinate(out) = (S)-malate(out) + succinate(in). The catalysed reaction is (S)-malate(in) + sulfate(out) = (S)-malate(out) + sulfate(in). It carries out the reaction 2 thiosulfate(out) + (S)-malate(in) = 2 thiosulfate(in) + (S)-malate(out). The enzyme catalyses malonate(out) + phosphate(in) = malonate(in) + phosphate(out). It catalyses the reaction succinate(out) + phosphate(in) = succinate(in) + phosphate(out). The catalysed reaction is sulfate(out) + phosphate(in) = sulfate(in) + phosphate(out). It carries out the reaction 2 thiosulfate(out) + phosphate(in) = 2 thiosulfate(in) + phosphate(out). The enzyme catalyses malonate(out) + succinate(in) = malonate(in) + succinate(out). Its function is as follows. Catalyzes the electroneutral exchange or flux of physiologically important metabolites such as dicarboxylates (malonate, malate, succinate), inorganic sulfur-containing anions, and phosphate, across mitochondrial inner membrane. Plays an important role in gluconeogenesis, fatty acid metabolism, urea synthesis, and sulfur metabolism, by supplying the substrates for the different metabolic processes. In Caenorhabditis elegans, this protein is Mitochondrial dicarboxylate carrier.